Consider the following 404-residue polypeptide: Deoxyguanosinetriphosphate triphosphohydrolase-like protein 1 (404 aa).

Residues 75–219 (RLTHSIEVAQ…AAIADDIAYN (145 aa)) enclose the HD domain.

The protein belongs to the dGTPase family. Type 2 subfamily.

This is Deoxyguanosinetriphosphate triphosphohydrolase-like protein 1 from Mesorhizobium japonicum (strain LMG 29417 / CECT 9101 / MAFF 303099) (Mesorhizobium loti (strain MAFF 303099)).